A 439-amino-acid chain; its full sequence is tRNA-2-methylthio-N(6)-dimethylallyladenosine synthase (439 aa).

The MTTase N-terminal domain maps to 5–121 (KKLFIKTYGC…LPELEAKTRA (117 aa)). Residues cysteine 14, cysteine 50, cysteine 84, cysteine 159, cysteine 163, and cysteine 166 each contribute to the [4Fe-4S] cluster site. Positions 145–378 (AKRGPTAFLT…ITRHQREIQD (234 aa)) constitute a Radical SAM core domain. The 62-residue stretch at 378-439 (DGMVGREVSV…GANSLAGELA (62 aa)) folds into the TRAM domain.

The protein belongs to the methylthiotransferase family. MiaB subfamily. As to quaternary structure, monomer. Requires [4Fe-4S] cluster as cofactor.

The protein localises to the cytoplasm. The enzyme catalyses N(6)-dimethylallyladenosine(37) in tRNA + (sulfur carrier)-SH + AH2 + 2 S-adenosyl-L-methionine = 2-methylsulfanyl-N(6)-dimethylallyladenosine(37) in tRNA + (sulfur carrier)-H + 5'-deoxyadenosine + L-methionine + A + S-adenosyl-L-homocysteine + 2 H(+). Functionally, catalyzes the methylthiolation of N6-(dimethylallyl)adenosine (i(6)A), leading to the formation of 2-methylthio-N6-(dimethylallyl)adenosine (ms(2)i(6)A) at position 37 in tRNAs that read codons beginning with uridine. The protein is tRNA-2-methylthio-N(6)-dimethylallyladenosine synthase of Ruegeria pomeroyi (strain ATCC 700808 / DSM 15171 / DSS-3) (Silicibacter pomeroyi).